The chain runs to 352 residues: Peptide chain release factor 1 (352 aa).

An N5-methylglutamine modification is found at Gln233. The interval 288–309 (NAKDRKEQVGSGDRSERIRTYN) is disordered. Positions 289–306 (AKDRKEQVGSGDRSERIR) are enriched in basic and acidic residues.

The protein belongs to the prokaryotic/mitochondrial release factor family. In terms of processing, methylated by PrmC. Methylation increases the termination efficiency of RF1.

Its subcellular location is the cytoplasm. Its function is as follows. Peptide chain release factor 1 directs the termination of translation in response to the peptide chain termination codons UAG and UAA. The sequence is that of Peptide chain release factor 1 from Helicobacter pylori (strain Shi470).